A 429-amino-acid chain; its full sequence is Septin-11 (429 aa).

A2 carries the post-translational modification N-acetylalanine. S9 is subject to Phosphoserine. Positions 38-304 constitute a Septin-type G domain; it reads QGFCFNILCV…ELYRRCKLEE (267 aa). The interval 48–55 is G1 motif; sequence GETGIGKS. Residues 48 to 55, G103, 184 to 192, G238, and R253 contribute to the GTP site; these read GETGIGKS and KADTIAKNE. Residues 100–103 are G3 motif; that stretch reads DTVG. The interval 183–186 is G4 motif; sequence AKAD. The stretch at 320–415 forms a coiled coil; sequence QETYEAKRNE…QSQAQQSGAQ (96 aa). The interval 398–429 is disordered; the sequence is KKAAAQLLQSQAQQSGAQQTKKDKDKKNASFT. Positions 401-416 are enriched in low complexity; that stretch reads AAQLLQSQAQQSGAQQ. Residues 417–429 are compositionally biased toward basic and acidic residues; sequence TKKDKDKKNASFT.

It belongs to the TRAFAC class TrmE-Era-EngA-EngB-Septin-like GTPase superfamily. Septin GTPase family. Septins polymerize into heterooligomeric protein complexes that form filaments, and can associate with cellular membranes, actin filaments and microtubules. Forms homooligomers. GTPase activity is required for filament formation. Interacts with SEPTIN7, SEPTIN9 and SEPTIN12. Widely expressed, except in leukocytes.

The protein localises to the cytoplasm. It is found in the cytoskeleton. The protein resides in the synapse. Its subcellular location is the cell projection. It localises to the dendritic spine. The protein localises to the axon. Its function is as follows. Filament-forming cytoskeletal GTPase. May play a role in cytokinesis (Potential). May play a role in the cytoarchitecture of neurons, including dendritic arborization and dendritic spines, and in GABAergic synaptic connectivity. During Listeria monocytogenes infection, not required for the bacterial entry process, but restricts its efficacy. This is Septin-11 from Homo sapiens (Human).